The sequence spans 699 residues: Polyribonucleotide nucleotidyltransferase (699 aa).

The Mg(2+) site is built by aspartate 485 and aspartate 491. Positions 552-611 (PRITTIKINPEKIRDVIGKGGAVIRALTEETGTTIELEDDGTVRIASSNGEATKEAIRRI) constitute a KH domain. In terms of domain architecture, S1 motif spans 621-689 (GRIYNGKVIR…RQGRVRLSIK (69 aa)).

It belongs to the polyribonucleotide nucleotidyltransferase family. As to quaternary structure, component of the RNA degradosome, which is a multiprotein complex involved in RNA processing and mRNA degradation. Mg(2+) serves as cofactor.

Its subcellular location is the cytoplasm. The enzyme catalyses RNA(n+1) + phosphate = RNA(n) + a ribonucleoside 5'-diphosphate. Functionally, involved in mRNA degradation. Catalyzes the phosphorolysis of single-stranded polyribonucleotides processively in the 3'- to 5'-direction. The protein is Polyribonucleotide nucleotidyltransferase of Shewanella sp. (strain W3-18-1).